A 328-amino-acid chain; its full sequence is Putative gluconeogenesis factor (328 aa).

It belongs to the gluconeogenesis factor family.

It localises to the cytoplasm. Its function is as follows. Required for morphogenesis under gluconeogenic growth conditions. This chain is Putative gluconeogenesis factor, found in Aquifex aeolicus (strain VF5).